The sequence spans 384 residues: Probable zinc-binding alcohol dehydrogenase Rv1895 (384 aa).

C38, H59, C89, C92, C95, and C103 together coordinate Zn(2+).

Belongs to the zinc-containing alcohol dehydrogenase family. Zn(2+) is required as a cofactor.

It catalyses the reaction a primary alcohol + NAD(+) = an aldehyde + NADH + H(+). The enzyme catalyses a secondary alcohol + NAD(+) = a ketone + NADH + H(+). This is Probable zinc-binding alcohol dehydrogenase Rv1895 from Mycobacterium tuberculosis (strain ATCC 25618 / H37Rv).